The sequence spans 353 residues: MTKITNDLFLKAARKEQVDRIPVWYMRQAGRSQPEYRKLKEKYSLFEITHQPEICAYVTKLPVDQYGVDAAILYKDIMTPLPGMGVDVEIKSGIGPVIHNPIRSFQDVEKLTIFKPEIEVPYVLDTIKLLADDMLDVPLIGFAGAPFTLASYMIEGGPSKNYHQTKSFMYREPEVWAILMEKLGRMTANYLIAQINAGASAVQLFDSWVGALSRADYAEYIRPVIEMIVREVKAVHPTTPIIMQAVGASHLLEEWETMPLDVVGVDWRETITSARKKVPTKAIQGNLDPSTLLAPEKCLKEANRILQEGVLEPGYIFNLGHGVFPEVPPEMLKQLTNYIHERSEILLKKDDIK.

Substrate-binding positions include 27–31, Phe46, Asp76, Tyr152, Ser207, and His321; that span reads RQAGR.

Belongs to the uroporphyrinogen decarboxylase family. In terms of assembly, homodimer.

The protein resides in the cytoplasm. It catalyses the reaction uroporphyrinogen III + 4 H(+) = coproporphyrinogen III + 4 CO2. Its pathway is porphyrin-containing compound metabolism; protoporphyrin-IX biosynthesis; coproporphyrinogen-III from 5-aminolevulinate: step 4/4. Its function is as follows. Catalyzes the decarboxylation of four acetate groups of uroporphyrinogen-III to yield coproporphyrinogen-III. This chain is Uroporphyrinogen decarboxylase, found in Listeria monocytogenes serovar 1/2a (strain ATCC BAA-679 / EGD-e).